A 141-amino-acid chain; its full sequence is UPF0102 protein BRADO0179 (141 aa).

Residues 1 to 24 (MAETDRATDKPAGAPKPAKTASPE) form a disordered region. The segment covering 10-19 (KPAGAPKPAK) has biased composition (low complexity).

Belongs to the UPF0102 family.

This is UPF0102 protein BRADO0179 from Bradyrhizobium sp. (strain ORS 278).